Consider the following 123-residue polypeptide: Hydrogenase maturation factor HypA (123 aa).

Residue His-2 participates in Ni(2+) binding. Cys-73, Cys-76, Cys-90, and Cys-93 together coordinate Zn(2+).

The protein belongs to the HypA/HybF family.

Functionally, involved in the maturation of [NiFe] hydrogenases. Required for nickel insertion into the metal center of the hydrogenase. This is Hydrogenase maturation factor HypA from Roseiflexus sp. (strain RS-1).